A 202-amino-acid chain; its full sequence is Recombination protein RecR (202 aa).

The C4-type zinc finger occupies 56–71 (CVVCGTVSDKEHCRIC). The 101-residue stretch at 79–179 (TVICVVEEPK…TVSRLASGLP (101 aa)) folds into the Toprim domain.

This sequence belongs to the RecR family.

Its function is as follows. May play a role in DNA repair. It seems to be involved in an RecBC-independent recombinational process of DNA repair. It may act with RecF and RecO. The polypeptide is Recombination protein RecR (Rhodococcus jostii (strain RHA1)).